Here is a 103-residue protein sequence, read N- to C-terminus: MELIEQVSVAKKANIYFEGKVASRSVFFNDGSKQTLGVVLPGEYEFSTSQGEIMQVTSGSFEVLLPDSTTWQTFSEGSQFELVANASFKIRNSAIAEYCCSYL.

The protein belongs to the nucleoside phosphorylase PpnP family.

The enzyme catalyses a purine D-ribonucleoside + phosphate = a purine nucleobase + alpha-D-ribose 1-phosphate. It carries out the reaction adenosine + phosphate = alpha-D-ribose 1-phosphate + adenine. The catalysed reaction is cytidine + phosphate = cytosine + alpha-D-ribose 1-phosphate. It catalyses the reaction guanosine + phosphate = alpha-D-ribose 1-phosphate + guanine. The enzyme catalyses inosine + phosphate = alpha-D-ribose 1-phosphate + hypoxanthine. It carries out the reaction thymidine + phosphate = 2-deoxy-alpha-D-ribose 1-phosphate + thymine. The catalysed reaction is uridine + phosphate = alpha-D-ribose 1-phosphate + uracil. It catalyses the reaction xanthosine + phosphate = alpha-D-ribose 1-phosphate + xanthine. Functionally, catalyzes the phosphorolysis of diverse nucleosides, yielding D-ribose 1-phosphate and the respective free bases. Can use uridine, adenosine, guanosine, cytidine, thymidine, inosine and xanthosine as substrates. Also catalyzes the reverse reactions. This Shewanella sp. (strain MR-4) protein is Pyrimidine/purine nucleoside phosphorylase.